The sequence spans 285 residues: MRWLLPLSRTVTLAVVRLRRGICGLGMFYAVRRGRRTGVFLSWSECKAQVDRFPAARFKKFATEDEAWAFVRSSSSPDGSKGQESAHEQKSQAKTSKRPREPLGEGEELPEPGPKHTRQDTEPAAVVSKDTFSYMGESVIVYTDGCCSSNGRKRARAGIGVYWGPGHPLNVGIRLPGRQTNQRAEIHAACKAIMQAKAQNISKLVLYTDSMFTINGITNWVQGWKKNGWRTSTGKDVINKEDFMELDELTQGMDIQWMHIPGHSGFVGNEEADRLAREGAKQSED.

Residues 72 to 126 (RSSSSPDGSKGQESAHEQKSQAKTSKRPREPLGEGEELPEPGPKHTRQDTEPAAV) form a disordered region. An RNase H type-1 domain is found at 135 to 281 (MGESVIVYTD…ADRLAREGAK (147 aa)). Positions 144, 185, 209, and 273 each coordinate Mg(2+).

The protein belongs to the RNase H family. In terms of assembly, monomer. The cofactor is Mg(2+).

The protein localises to the cytoplasm. The catalysed reaction is Endonucleolytic cleavage to 5'-phosphomonoester.. Its activity is regulated as follows. In the presence of magnesium, manganese is inhibitory. Its function is as follows. Endonuclease that specifically degrades the RNA of RNA-DNA hybrids. Plays a role in RNA polymerase II (RNAp II) transcription termination by degrading R-loop RNA-DNA hybrid formation at G-rich pause sites located downstream of the poly(A) site and behind the elongating RNAp II. This chain is Ribonuclease H1 (Rnaseh1), found in Mus musculus (Mouse).